The chain runs to 528 residues: Benzoylformate decarboxylase (528 aa).

Gln-117 and Leu-118 together coordinate Mg(2+). The thiamine pyrophosphate binding stretch occupies residues 377–460; the sequence is TSTVTAFWQR…IILKNGTYGA (84 aa). Ca(2+) contacts are provided by Asp-428, Asn-455, and Thr-457.

Belongs to the TPP enzyme family. Homotetramer. The cofactor is Ca(2+). Thiamine diphosphate is required as a cofactor. It depends on Mg(2+) as a cofactor.

The catalysed reaction is phenylglyoxylate + H(+) = benzaldehyde + CO2. Its pathway is aromatic compound metabolism; (R)-mandelate degradation; benzoate from (R)-mandelate: step 3/4. The chain is Benzoylformate decarboxylase (mdlC) from Pseudomonas aeruginosa (strain ATCC 15692 / DSM 22644 / CIP 104116 / JCM 14847 / LMG 12228 / 1C / PRS 101 / PAO1).